Consider the following 208-residue polypeptide: Protein GrpE (208 aa).

Residues 1 to 25 are compositionally biased toward basic and acidic residues; sequence MVDNKDFNEELKENIQEELDNETKA. The segment at 1-38 is disordered; that stretch reads MVDNKDFNEELKENIQEELDNETKAENPNIDEEVEEVS. The segment covering 29–38 has biased composition (acidic residues); sequence NIDEEVEEVS.

Belongs to the GrpE family. In terms of assembly, homodimer.

It is found in the cytoplasm. In terms of biological role, participates actively in the response to hyperosmotic and heat shock by preventing the aggregation of stress-denatured proteins, in association with DnaK and GrpE. It is the nucleotide exchange factor for DnaK and may function as a thermosensor. Unfolded proteins bind initially to DnaJ; upon interaction with the DnaJ-bound protein, DnaK hydrolyzes its bound ATP, resulting in the formation of a stable complex. GrpE releases ADP from DnaK; ATP binding to DnaK triggers the release of the substrate protein, thus completing the reaction cycle. Several rounds of ATP-dependent interactions between DnaJ, DnaK and GrpE are required for fully efficient folding. The chain is Protein GrpE from Clostridium perfringens (strain 13 / Type A).